Here is a 51-residue protein sequence, read N- to C-terminus: Large ribosomal subunit protein eL39 (51 aa).

This sequence belongs to the eukaryotic ribosomal protein eL39 family.

In Pyrobaculum aerophilum (strain ATCC 51768 / DSM 7523 / JCM 9630 / CIP 104966 / NBRC 100827 / IM2), this protein is Large ribosomal subunit protein eL39 (rpl39e).